We begin with the raw amino-acid sequence, 217 residues long: Thiamine-phosphate synthase (217 aa).

4-amino-2-methyl-5-(diphosphooxymethyl)pyrimidine contacts are provided by residues 39 to 43 (QYRDK) and Asn-71. The Mg(2+) site is built by Asp-72 and Asp-91. Thr-110 contributes to the 4-amino-2-methyl-5-(diphosphooxymethyl)pyrimidine binding site. 2-[(2R,5Z)-2-carboxy-4-methylthiazol-5(2H)-ylidene]ethyl phosphate is bound at residue 137 to 139 (SHT). Residue Lys-140 coordinates 4-amino-2-methyl-5-(diphosphooxymethyl)pyrimidine. 2-[(2R,5Z)-2-carboxy-4-methylthiazol-5(2H)-ylidene]ethyl phosphate is bound at residue Gly-167.

Belongs to the thiamine-phosphate synthase family. Mg(2+) is required as a cofactor.

The enzyme catalyses 2-[(2R,5Z)-2-carboxy-4-methylthiazol-5(2H)-ylidene]ethyl phosphate + 4-amino-2-methyl-5-(diphosphooxymethyl)pyrimidine + 2 H(+) = thiamine phosphate + CO2 + diphosphate. It catalyses the reaction 2-(2-carboxy-4-methylthiazol-5-yl)ethyl phosphate + 4-amino-2-methyl-5-(diphosphooxymethyl)pyrimidine + 2 H(+) = thiamine phosphate + CO2 + diphosphate. It carries out the reaction 4-methyl-5-(2-phosphooxyethyl)-thiazole + 4-amino-2-methyl-5-(diphosphooxymethyl)pyrimidine + H(+) = thiamine phosphate + diphosphate. The protein operates within cofactor biosynthesis; thiamine diphosphate biosynthesis; thiamine phosphate from 4-amino-2-methyl-5-diphosphomethylpyrimidine and 4-methyl-5-(2-phosphoethyl)-thiazole: step 1/1. In terms of biological role, condenses 4-methyl-5-(beta-hydroxyethyl)thiazole monophosphate (THZ-P) and 2-methyl-4-amino-5-hydroxymethyl pyrimidine pyrophosphate (HMP-PP) to form thiamine monophosphate (TMP). This Alcanivorax borkumensis (strain ATCC 700651 / DSM 11573 / NCIMB 13689 / SK2) protein is Thiamine-phosphate synthase.